The following is a 221-amino-acid chain: MNKIKSMLSVYFIAGSQDCRHLPGSPVENLLNILQQALEAGITCFQFREKGERSLAQNPQLKHRLALQCQQLCRQFNVPFIINDDIGLALAIRADGIHVGQKDTAVERILSRADYRPIIGLSINTLEQAQANKERLGIDYFGIGPIFATQSKADHAPAVGMEFIRQIHELGIDKPCVAIGGIHEDNTAEIRRLGANGVAVISAITRSNDIARTVQNLACHS.

Residues 46 to 50 (QFREK) and asparagine 83 each bind 4-amino-2-methyl-5-(diphosphooxymethyl)pyrimidine. Positions 84 and 103 each coordinate Mg(2+). Serine 122 contributes to the 4-amino-2-methyl-5-(diphosphooxymethyl)pyrimidine binding site. Residue 149–151 (TQS) coordinates 2-[(2R,5Z)-2-carboxy-4-methylthiazol-5(2H)-ylidene]ethyl phosphate. Lysine 152 is a binding site for 4-amino-2-methyl-5-(diphosphooxymethyl)pyrimidine. Residues glycine 181 and 201 to 202 (IS) each bind 2-[(2R,5Z)-2-carboxy-4-methylthiazol-5(2H)-ylidene]ethyl phosphate.

It belongs to the thiamine-phosphate synthase family. The cofactor is Mg(2+).

The enzyme catalyses 2-[(2R,5Z)-2-carboxy-4-methylthiazol-5(2H)-ylidene]ethyl phosphate + 4-amino-2-methyl-5-(diphosphooxymethyl)pyrimidine + 2 H(+) = thiamine phosphate + CO2 + diphosphate. The catalysed reaction is 2-(2-carboxy-4-methylthiazol-5-yl)ethyl phosphate + 4-amino-2-methyl-5-(diphosphooxymethyl)pyrimidine + 2 H(+) = thiamine phosphate + CO2 + diphosphate. It carries out the reaction 4-methyl-5-(2-phosphooxyethyl)-thiazole + 4-amino-2-methyl-5-(diphosphooxymethyl)pyrimidine + H(+) = thiamine phosphate + diphosphate. Its pathway is cofactor biosynthesis; thiamine diphosphate biosynthesis; thiamine phosphate from 4-amino-2-methyl-5-diphosphomethylpyrimidine and 4-methyl-5-(2-phosphoethyl)-thiazole: step 1/1. Functionally, condenses 4-methyl-5-(beta-hydroxyethyl)thiazole monophosphate (THZ-P) and 2-methyl-4-amino-5-hydroxymethyl pyrimidine pyrophosphate (HMP-PP) to form thiamine monophosphate (TMP). The protein is Thiamine-phosphate synthase of Actinobacillus succinogenes (strain ATCC 55618 / DSM 22257 / CCUG 43843 / 130Z).